We begin with the raw amino-acid sequence, 290 residues long: Inorganic pyrophosphatase (290 aa).

Arginine 81 lines the diphosphate pocket. 3 residues coordinate Mg(2+): aspartate 118, aspartate 123, and aspartate 155.

The protein belongs to the PPase family. It depends on Mg(2+) as a cofactor.

Its subcellular location is the cytoplasm. The catalysed reaction is diphosphate + H2O = 2 phosphate + H(+). This Neurospora crassa (strain ATCC 24698 / 74-OR23-1A / CBS 708.71 / DSM 1257 / FGSC 987) protein is Inorganic pyrophosphatase (ipp-1).